The chain runs to 110 residues: Large ribosomal subunit protein uL22 (110 aa).

It belongs to the universal ribosomal protein uL22 family. As to quaternary structure, part of the 50S ribosomal subunit.

Functionally, this protein binds specifically to 23S rRNA; its binding is stimulated by other ribosomal proteins, e.g. L4, L17, and L20. It is important during the early stages of 50S assembly. It makes multiple contacts with different domains of the 23S rRNA in the assembled 50S subunit and ribosome. The globular domain of the protein is located near the polypeptide exit tunnel on the outside of the subunit, while an extended beta-hairpin is found that lines the wall of the exit tunnel in the center of the 70S ribosome. The protein is Large ribosomal subunit protein uL22 of Acinetobacter baumannii (strain ACICU).